A 153-amino-acid chain; its full sequence is ATP synthase subunit b' (153 aa).

Residues Leu-23–Phe-40 traverse the membrane as a helical segment.

The protein belongs to the ATPase B chain family. As to quaternary structure, F-type ATPases have 2 components, F(1) - the catalytic core - and F(0) - the membrane proton channel. F(1) has five subunits: alpha(3), beta(3), gamma(1), delta(1), epsilon(1). F(0) has four main subunits: a(1), b(1), b'(1) and c(10-14). The alpha and beta chains form an alternating ring which encloses part of the gamma chain. F(1) is attached to F(0) by a central stalk formed by the gamma and epsilon chains, while a peripheral stalk is formed by the delta, b and b' chains.

It localises to the cellular thylakoid membrane. In terms of biological role, f(1)F(0) ATP synthase produces ATP from ADP in the presence of a proton or sodium gradient. F-type ATPases consist of two structural domains, F(1) containing the extramembraneous catalytic core and F(0) containing the membrane proton channel, linked together by a central stalk and a peripheral stalk. During catalysis, ATP synthesis in the catalytic domain of F(1) is coupled via a rotary mechanism of the central stalk subunits to proton translocation. Component of the F(0) channel, it forms part of the peripheral stalk, linking F(1) to F(0). The b'-subunit is a diverged and duplicated form of b found in plants and photosynthetic bacteria. This Prochlorococcus marinus (strain MIT 9215) protein is ATP synthase subunit b'.